A 156-amino-acid polypeptide reads, in one-letter code: ATP synthase subunit b (156 aa).

The chain crosses the membrane as a helical span at residues 12–32 (VAFFIFVLFCMKFVWPPVIAA).

It belongs to the ATPase B chain family. As to quaternary structure, F-type ATPases have 2 components, F(1) - the catalytic core - and F(0) - the membrane proton channel. F(1) has five subunits: alpha(3), beta(3), gamma(1), delta(1), epsilon(1). F(0) has three main subunits: a(1), b(2) and c(10-14). The alpha and beta chains form an alternating ring which encloses part of the gamma chain. F(1) is attached to F(0) by a central stalk formed by the gamma and epsilon chains, while a peripheral stalk is formed by the delta and b chains.

Its subcellular location is the cell inner membrane. Functionally, f(1)F(0) ATP synthase produces ATP from ADP in the presence of a proton or sodium gradient. F-type ATPases consist of two structural domains, F(1) containing the extramembraneous catalytic core and F(0) containing the membrane proton channel, linked together by a central stalk and a peripheral stalk. During catalysis, ATP synthesis in the catalytic domain of F(1) is coupled via a rotary mechanism of the central stalk subunits to proton translocation. Its function is as follows. Component of the F(0) channel, it forms part of the peripheral stalk, linking F(1) to F(0). This Pseudomonas aeruginosa (strain UCBPP-PA14) protein is ATP synthase subunit b.